The primary structure comprises 65 residues: ATP synthase F(0) complex subunit 8 (65 aa).

A helical transmembrane segment spans residues 8 to 24 (TWLTTILSMFLALFIIF). An N6-acetyllysine; alternate modification is found at K53. N6-succinyllysine; alternate is present on K53. At K56 the chain carries N6-acetyllysine.

This sequence belongs to the ATPase protein 8 family. In terms of assembly, component of the ATP synthase complex composed at least of ATP5F1A/subunit alpha, ATP5F1B/subunit beta, ATP5MC1/subunit c (homooctomer), MT-ATP6/subunit a, MT-ATP8/subunit 8, ATP5ME/subunit e, ATP5MF/subunit f, ATP5MG/subunit g, ATP5MK/subunit k, ATP5MJ/subunit j, ATP5F1C/subunit gamma, ATP5F1D/subunit delta, ATP5F1E/subunit epsilon, ATP5PF/subunit F6, ATP5PB/subunit b, ATP5PD/subunit d, ATP5PO/subunit OSCP. ATP synthase complex consists of a soluble F(1) head domain (subunits alpha(3) and beta(3)) - the catalytic core - and a membrane F(0) domain - the membrane proton channel (subunits c, a, 8, e, f, g, k and j). These two domains are linked by a central stalk (subunits gamma, delta, and epsilon) rotating inside the F1 region and a stationary peripheral stalk (subunits F6, b, d, and OSCP). Interacts with PRICKLE3.

The protein localises to the mitochondrion membrane. Its function is as follows. Subunit 8, of the mitochondrial membrane ATP synthase complex (F(1)F(0) ATP synthase or Complex V) that produces ATP from ADP in the presence of a proton gradient across the membrane which is generated by electron transport complexes of the respiratory chain. ATP synthase complex consist of a soluble F(1) head domain - the catalytic core - and a membrane F(1) domain - the membrane proton channel. These two domains are linked by a central stalk rotating inside the F(1) region and a stationary peripheral stalk. During catalysis, ATP synthesis in the catalytic domain of F(1) is coupled via a rotary mechanism of the central stalk subunits to proton translocation. In vivo, can only synthesize ATP although its ATP hydrolase activity can be activated artificially in vitro. Part of the complex F(0) domain. The chain is ATP synthase F(0) complex subunit 8 from Capra ibex ibex (Alpine ibex).